Consider the following 194-residue polypeptide: Lytic chitin monooxygenase (194 aa).

The N-terminal stretch at 1-28 (MKKSLLTIVLAFSFVLGGAALAPTVSEA) is a signal peptide. 2 residues coordinate Cu cation: histidine 29 and histidine 114. One can recognise a Chitin-binding type-4 domain in the interval 29–191 (HGYVASPGSR…VNAFYQAIDV (163 aa)).

The cofactor is Cu(2+).

It is found in the secreted. The enzyme catalyses [(1-&gt;4)-N-acetyl-beta-D-glucosaminyl]n+m + reduced acceptor + O2 = [(1-&gt;4)-N-acetyl-beta-D-glucosaminyl]m-1-(1-&gt;4)-2-(acetylamino)-2-deoxy-D-glucono-1,5-lactone + [(1-&gt;4)-N-acetyl-beta-D-glucosaminyl]n + acceptor + H2O.. The protein operates within glycan degradation; chitin degradation. In terms of biological role, involved in chitin degradation. Catalyzes the oxidative cleavage of glycosidic bonds in both alpha- and beta-chitin via a copper-dependent mechanism, leading to oxidized chitooligosaccharides with a dominance of even-numbered products. Acts synergistically with the chitinase EfChi18A, and combining the two enzymes leads to rapid and complete depolymerization of crystalline chitin, especially with beta-chitin as a substrate. Is likely involved in a chitin degradation pathway that allows E.faecalis V583 to grow on chitin as a carbon source. This chain is Lytic chitin monooxygenase, found in Enterococcus faecalis (strain ATCC 700802 / V583).